The chain runs to 1056 residues: Carbamoyl phosphate synthase large chain (1056 aa).

The segment at 1–399 (MKIDVSKVIV…AFQKAIRMLD (399 aa)) is carboxyphosphate synthetic domain. ATP-binding residues include R127, R167, G173, G174, K206, L208, E213, G239, V240, H241, Q282, and E296. The region spanning 131–325 (QKTMKKVGLP…LAYIATKLAI (195 aa)) is the ATP-grasp 1 domain. 3 residues coordinate Mg(2+): Q282, E296, and N298. Positions 282, 296, and 298 each coordinate Mn(2+). An oligomerization domain region spans residues 400–536 (IGDELIGKYY…VTYDGVENDI (137 aa)). The segment at 537–919 (PKPKKPSILV…LKSWLSVKPN (383 aa)) is carbamoyl phosphate synthetic domain. In terms of domain architecture, ATP-grasp 2 spans 661 to 849 (SKLLEKLGIP…LMELSAQAVL (189 aa)). Residues R697, K736, I738, E742, G766, V767, H768, S769, Q809, and E820 each coordinate ATP. Residues Q809, E820, and N822 each coordinate Mg(2+). 3 residues coordinate Mn(2+): Q809, E820, and N822. Residues 915–1043 (SVKPNELPKT…REYWIRKIEE (129 aa)) enclose the MGS-like domain. The tract at residues 920 to 1056 (ELPKTSALIY…EYAASVVLRR (137 aa)) is allosteric domain.

Belongs to the CarB family. Composed of two chains; the small (or glutamine) chain promotes the hydrolysis of glutamine to ammonia, which is used by the large (or ammonia) chain to synthesize carbamoyl phosphate. Tetramer of heterodimers (alpha,beta)4. It depends on Mg(2+) as a cofactor. Mn(2+) is required as a cofactor.

The enzyme catalyses hydrogencarbonate + L-glutamine + 2 ATP + H2O = carbamoyl phosphate + L-glutamate + 2 ADP + phosphate + 2 H(+). It carries out the reaction hydrogencarbonate + NH4(+) + 2 ATP = carbamoyl phosphate + 2 ADP + phosphate + 2 H(+). It participates in amino-acid biosynthesis; L-arginine biosynthesis; carbamoyl phosphate from bicarbonate: step 1/1. The protein operates within pyrimidine metabolism; UMP biosynthesis via de novo pathway; (S)-dihydroorotate from bicarbonate: step 1/3. Its function is as follows. Large subunit of the glutamine-dependent carbamoyl phosphate synthetase (CPSase). CPSase catalyzes the formation of carbamoyl phosphate from the ammonia moiety of glutamine, carbonate, and phosphate donated by ATP, constituting the first step of 2 biosynthetic pathways, one leading to arginine and/or urea and the other to pyrimidine nucleotides. The large subunit (synthetase) binds the substrates ammonia (free or transferred from glutamine from the small subunit), hydrogencarbonate and ATP and carries out an ATP-coupled ligase reaction, activating hydrogencarbonate by forming carboxy phosphate which reacts with ammonia to form carbamoyl phosphate. In Pyrococcus furiosus (strain ATCC 43587 / DSM 3638 / JCM 8422 / Vc1), this protein is Carbamoyl phosphate synthase large chain.